Reading from the N-terminus, the 109-residue chain is uncharacterized protein (109 aa).

The signal sequence occupies residues 1–25; that stretch reads MKGIFLVVQLGFSIMVFLFLAAVNW. A helical membrane pass occupies residues 73 to 95; that stretch reads YPVMSALMIISFLYVLAALFLLI.

Its subcellular location is the membrane. This is an uncharacterized protein from Bacillus subtilis (strain 168).